Consider the following 221-residue polypeptide: Ribosomal RNA large subunit methyltransferase E (221 aa).

S-adenosyl-L-methionine-binding residues include glycine 60, tryptophan 62, aspartate 89, aspartate 105, and aspartate 134. The Proton acceptor role is filled by lysine 174.

Belongs to the class I-like SAM-binding methyltransferase superfamily. RNA methyltransferase RlmE family.

It localises to the cytoplasm. The catalysed reaction is uridine(2552) in 23S rRNA + S-adenosyl-L-methionine = 2'-O-methyluridine(2552) in 23S rRNA + S-adenosyl-L-homocysteine + H(+). Its function is as follows. Specifically methylates the uridine in position 2552 of 23S rRNA at the 2'-O position of the ribose in the fully assembled 50S ribosomal subunit. This is Ribosomal RNA large subunit methyltransferase E from Cupriavidus taiwanensis (strain DSM 17343 / BCRC 17206 / CCUG 44338 / CIP 107171 / LMG 19424 / R1) (Ralstonia taiwanensis (strain LMG 19424)).